The sequence spans 227 residues: Cytochrome c oxidase subunit 2 (227 aa).

Residues 1 to 14 lie on the Mitochondrial intermembrane side of the membrane; that stretch reads MAYPFQLGLQDATS. Residues 15–45 form a helical membrane-spanning segment; that stretch reads PIMEELLHFHDHTLMIVFLISSLVLYIISLM. Topologically, residues 46 to 59 are mitochondrial matrix; that stretch reads LTTKLTHTSTMDAQ. A helical transmembrane segment spans residues 60–87; that stretch reads EVETVWTILPAIILILIALPSLRILYMM. The Mitochondrial intermembrane segment spans residues 88 to 227; that stretch reads DEINNPSLTV…YFETWSALMV (140 aa). Cu cation-binding residues include His161, Cys196, Glu198, Cys200, His204, and Met207. A Mg(2+)-binding site is contributed by Glu198. Tyr218 is modified (phosphotyrosine).

The protein belongs to the cytochrome c oxidase subunit 2 family. In terms of assembly, component of the cytochrome c oxidase (complex IV, CIV), a multisubunit enzyme composed of 14 subunits. The complex is composed of a catalytic core of 3 subunits MT-CO1, MT-CO2 and MT-CO3, encoded in the mitochondrial DNA, and 11 supernumerary subunits COX4I, COX5A, COX5B, COX6A, COX6B, COX6C, COX7A, COX7B, COX7C, COX8 and NDUFA4, which are encoded in the nuclear genome. The complex exists as a monomer or a dimer and forms supercomplexes (SCs) in the inner mitochondrial membrane with NADH-ubiquinone oxidoreductase (complex I, CI) and ubiquinol-cytochrome c oxidoreductase (cytochrome b-c1 complex, complex III, CIII), resulting in different assemblies (supercomplex SCI(1)III(2)IV(1) and megacomplex MCI(2)III(2)IV(2)). Found in a complex with TMEM177, COA6, COX18, COX20, SCO1 and SCO2. Interacts with TMEM177 in a COX20-dependent manner. Interacts with COX20. Interacts with COX16. It depends on Cu cation as a cofactor.

It is found in the mitochondrion inner membrane. The enzyme catalyses 4 Fe(II)-[cytochrome c] + O2 + 8 H(+)(in) = 4 Fe(III)-[cytochrome c] + 2 H2O + 4 H(+)(out). Component of the cytochrome c oxidase, the last enzyme in the mitochondrial electron transport chain which drives oxidative phosphorylation. The respiratory chain contains 3 multisubunit complexes succinate dehydrogenase (complex II, CII), ubiquinol-cytochrome c oxidoreductase (cytochrome b-c1 complex, complex III, CIII) and cytochrome c oxidase (complex IV, CIV), that cooperate to transfer electrons derived from NADH and succinate to molecular oxygen, creating an electrochemical gradient over the inner membrane that drives transmembrane transport and the ATP synthase. Cytochrome c oxidase is the component of the respiratory chain that catalyzes the reduction of oxygen to water. Electrons originating from reduced cytochrome c in the intermembrane space (IMS) are transferred via the dinuclear copper A center (CU(A)) of subunit 2 and heme A of subunit 1 to the active site in subunit 1, a binuclear center (BNC) formed by heme A3 and copper B (CU(B)). The BNC reduces molecular oxygen to 2 water molecules using 4 electrons from cytochrome c in the IMS and 4 protons from the mitochondrial matrix. In Urocyon cinereoargenteus (Gray fox), this protein is Cytochrome c oxidase subunit 2 (MT-CO2).